Reading from the N-terminus, the 65-residue chain is Large ribosomal subunit protein bL35 (65 aa).

The segment at 1 to 23 (MPKMKTHRGAAKRFKKTGTGKLK) is disordered.

This sequence belongs to the bacterial ribosomal protein bL35 family.

This is Large ribosomal subunit protein bL35 from Clostridium perfringens (strain ATCC 13124 / DSM 756 / JCM 1290 / NCIMB 6125 / NCTC 8237 / Type A).